The following is a 330-amino-acid chain: Phenylalanine--tRNA ligase alpha subunit (330 aa).

A Mg(2+)-binding site is contributed by glutamate 257.

The protein belongs to the class-II aminoacyl-tRNA synthetase family. Phe-tRNA synthetase alpha subunit type 1 subfamily. As to quaternary structure, tetramer of two alpha and two beta subunits. Requires Mg(2+) as cofactor.

The protein resides in the cytoplasm. The enzyme catalyses tRNA(Phe) + L-phenylalanine + ATP = L-phenylalanyl-tRNA(Phe) + AMP + diphosphate + H(+). This chain is Phenylalanine--tRNA ligase alpha subunit, found in Nostoc sp. (strain PCC 7120 / SAG 25.82 / UTEX 2576).